A 450-amino-acid polypeptide reads, in one-letter code: MVKLFCAIVGAAGSAFPVDIDAGQSAGDLKDAIKAKNPATITCDAKDLQLSLAKTADGAWLPDDDQAALDLEDGKVHEDIQALIDGEKMKATWTIEDVLTANNMTKRKGRAPKSRQIHVLVVVPEGAFGSASETSKMDQLVEKVDKMYEQTVLGKRKYVHSEVTSTQGRQLLNDLDIRVEFVRTVPFDAGEGSSVDPYEWKRVIIENGEEVVLTEEQQRKRYRRYVEHNIGAVLKEKQLCVIGVERGTNILTVKVPGREIELAGRTDLLILSDLVAMRPTEVQYLPGVKMLIEVKRDVKASNDFQALSELIALDLLVDDPVMALLTDLKGEWIFFWVAEKINSSARIHKAAINKPGEAFEVIRALLVQPPTAPADTDTTEIKLPCFQSPVKRLKLRKALPPIGEGGDNGGIRESIERYYDIASMLGPDIEMARAVARQVTRSIPTFSYFS.

The signal sequence occupies residues 1-17 (MVKLFCAIVGAAGSAFP). Residues 18–55 (VDIDAGQSAGDLKDAIKAKNPATITCDAKDLQLSLAKT) are LQLFLAK domain. The DWL domain stretch occupies residues 58 to 117 (GAWLPDDDQAALDLEDGKVHEDIQALIDGEKMKATWTIEDVLTANNMTKRKGRAPKSRQI). A glycan (N-linked (GlcNAc...) asparagine) is linked at Asn-103. Residues 118 to 124 (HVLVVVP) carry the HVLVXXP motif motif. The segment at 125 to 450 (EGAFGSASET…RSIPTFSYFS (326 aa)) is effector domain. The Nuclear localization signal (NLS) motif lies at 218 to 224 (QRKRYRR). N-linked (GlcNAc...) asparagine glycosylation occurs at Asn-342.

The protein belongs to the Crinkler effector family. Forms a homodimer via an inverted association manner. Forms heterodimers with CRN79 and CRN115.

It is found in the secreted. The protein resides in the host nucleus. The protein localises to the host nucleoplasm. Secreted effector that, with CRN115, is critical to pathogenesis by modulating host defenses. Induces cell death in plant host cells. Suppresses callose deposition and affects expression of defense-related genes including two salicylic acid (SA) signal-induced and antimicrobial PR genes (PR1 and PR2), and genes involved in jasmonic acid (JA)/ethylene (ET)-mediated defense pathway (ERF1, ORA59, PDF1.2). CRN115 and CRN63 may share the same molecular host targets that are involved in the cell death signal transduction pathway and that their differential activities are dependent on plant nuclear localization or not. Does not affect MAPK activation and BIK1 phosphorylation and acts downstream of the MAPK cascades in PTI signaling. This is Crinkler effector protein 63 from Phytophthora sojae (strain P6497) (Soybean stem and root rot agent).